The sequence spans 256 residues: F-actin-capping protein subunit beta (256 aa).

Position 1 is an N-acetylmethionine (Met-1).

The protein belongs to the F-actin-capping protein beta subunit family. As to quaternary structure, component of the F-actin capping complex, composed of a heterodimer of an alpha and a beta subunit.

The protein localises to the cytoplasm. Its subcellular location is the cytoskeleton. In terms of biological role, F-actin-capping proteins bind in a Ca(2+)-independent manner to the fast growing ends of actin filaments (barbed end) thereby blocking the exchange of subunits at these ends. Unlike other capping proteins (such as gelsolin and severin), these proteins do not sever actin filaments. The protein is F-actin-capping protein subunit beta of Arabidopsis thaliana (Mouse-ear cress).